The chain runs to 211 residues: Large ribosomal subunit protein uL3 (211 aa).

The disordered stretch occupies residues glycine 116–glycine 142.

Belongs to the universal ribosomal protein uL3 family. Part of the 50S ribosomal subunit. Forms a cluster with proteins L14 and L19.

Its function is as follows. One of the primary rRNA binding proteins, it binds directly near the 3'-end of the 23S rRNA, where it nucleates assembly of the 50S subunit. The sequence is that of Large ribosomal subunit protein uL3 from Fusobacterium nucleatum subsp. nucleatum (strain ATCC 25586 / DSM 15643 / BCRC 10681 / CIP 101130 / JCM 8532 / KCTC 2640 / LMG 13131 / VPI 4355).